The chain runs to 213 residues: ATP phosphoribosyltransferase (213 aa).

Belongs to the ATP phosphoribosyltransferase family. Short subfamily. In terms of assembly, heteromultimer composed of HisG and HisZ subunits.

It is found in the cytoplasm. It catalyses the reaction 1-(5-phospho-beta-D-ribosyl)-ATP + diphosphate = 5-phospho-alpha-D-ribose 1-diphosphate + ATP. It participates in amino-acid biosynthesis; L-histidine biosynthesis; L-histidine from 5-phospho-alpha-D-ribose 1-diphosphate: step 1/9. Its function is as follows. Catalyzes the condensation of ATP and 5-phosphoribose 1-diphosphate to form N'-(5'-phosphoribosyl)-ATP (PR-ATP). Has a crucial role in the pathway because the rate of histidine biosynthesis seems to be controlled primarily by regulation of HisG enzymatic activity. This is ATP phosphoribosyltransferase from Anoxybacillus flavithermus (strain DSM 21510 / WK1).